Reading from the N-terminus, the 317-residue chain is Serine/threonine-protein phosphatase PP1 isozyme 1 (317 aa).

Residues Asp75, His77, Asp103, and Asn135 each coordinate Mn(2+). His136 acts as the Proton donor in catalysis. Residues His184 and His259 each coordinate Mn(2+).

Belongs to the PPP phosphatase family. PP-1 subfamily. Requires Mn(2+) as cofactor.

It carries out the reaction O-phospho-L-seryl-[protein] + H2O = L-seryl-[protein] + phosphate. It catalyses the reaction O-phospho-L-threonyl-[protein] + H2O = L-threonyl-[protein] + phosphate. This Nicotiana tabacum (Common tobacco) protein is Serine/threonine-protein phosphatase PP1 isozyme 1 (NPP1).